Here is a 461-residue protein sequence, read N- to C-terminus: Pancreatic triacylglycerol lipase (461 aa).

Residues 1–12 (WTLSLLLGAVVG) form the signal peptide. 2 disulfides stabilise this stretch: Cys-16–Cys-22 and Cys-103–Cys-114. Ser-165 (nucleophile) is an active-site residue. The Charge relay system role is filled by Asp-189. Ca(2+) is bound by residues Glu-200, Arg-203, Asp-205, and Asp-208. Cys-250 and Cys-274 are joined by a disulfide. Catalysis depends on His-276, which acts as the Charge relay system. 3 disulfides stabilise this stretch: Cys-298/Cys-309, Cys-312/Cys-317, and Cys-445/Cys-461. Residues 351–461 (WRYRVDVTLS…EDVLLTLTAC (111 aa)) form the PLAT domain.

It belongs to the AB hydrolase superfamily. Lipase family. In terms of assembly, forms a 1:1 stoichiometric complex with (pro)colipase/CLPS.

The protein resides in the secreted. It carries out the reaction a triacylglycerol + H2O = a diacylglycerol + a fatty acid + H(+). It catalyses the reaction 1,2,3-tributanoylglycerol + H2O = dibutanoylglycerol + butanoate + H(+). The catalysed reaction is 1,2,3-tri-(9Z-octadecenoyl)-glycerol + H2O = di-(9Z)-octadecenoylglycerol + (9Z)-octadecenoate + H(+). The enzyme catalyses all-trans-retinyl hexadecanoate + H2O = all-trans-retinol + hexadecanoate + H(+). It carries out the reaction 1,2-di-(9Z-octadecenoyl)-glycerol + H2O = (9Z-octadecenoyl)-glycerol + (9Z)-octadecenoate + H(+). Inhibited by bile salts, is reactivated by (pro)colipase/CLPS. In terms of biological role, plays an important role in fat metabolism. It preferentially splits the esters of long-chain fatty acids at positions 1 and 3, producing mainly 2-monoacylglycerol and free fatty acids, and shows considerably higher activity against insoluble emulsified substrates than against soluble ones. The polypeptide is Pancreatic triacylglycerol lipase (PNLIP) (Equus caballus (Horse)).